We begin with the raw amino-acid sequence, 279 residues long: Sulfur carrier protein FdhD (279 aa).

Catalysis depends on C112, which acts as the Cysteine persulfide intermediate.

The protein belongs to the FdhD family.

It localises to the cytoplasm. In terms of biological role, required for formate dehydrogenase (FDH) activity. Acts as a sulfur carrier protein that transfers sulfur from IscS to the molybdenum cofactor prior to its insertion into FDH. This is Sulfur carrier protein FdhD from Nocardia farcinica (strain IFM 10152).